The primary structure comprises 351 residues: Soluble interferon alpha/beta receptor OPG204 (351 aa).

An N-terminal signal peptide occupies residues 1-23; it reads MKMKMMVRIYFVSLSLLLFHSYA. Ig-like C2-type domains lie at 65–137 and 155–237; these read LGEP…KNGD and PKTY…IVVS. 2 disulfide bridges follow: Cys-73/Cys-129 and Cys-172/Cys-221. 5 N-linked (GlcNAc...) asparagine; by host glycosylation sites follow: Asn-117, Asn-182, Asn-261, Asn-269, and Asn-321. The Ig-like V-type domain maps to 246 to 345; the sequence is PSQDHRFKLI…HNYYFDKTLT (100 aa). A disulfide bridge connects residues Cys-272 and Cys-333.

Belongs to the interleukin-1 receptor family. As to quaternary structure, interacts with host IFNA1.

The protein resides in the secreted. Its function is as follows. Counteracts the antiviral effects of host IFN-alpha/beta and key IFN-inducible proteins involved in viral RNA degradation suxh as host OAS1. Acts as a soluble IFN-alpha receptor and thus inhibits the interaction between host IFN-alpha and its receptor. This Cynomys gunnisoni (Gunnison's prairie dog) protein is Soluble interferon alpha/beta receptor OPG204 (OPG204).